Reading from the N-terminus, the 598-residue chain is Membrane protein insertase YidC (598 aa).

The chain crosses the membrane as a helical span at residues 7 to 27 (NYFIAIALSVLIVLGWQFLYM). A disordered region spans residues 37–76 (AQEAQKAQQQTEQVQQPAAGGQTPAQTSGAAPSGQAAATA). The segment covering 40 to 76 (AQKAQQQTEQVQQPAAGGQTPAQTSGAAPSGQAAATA) has biased composition (low complexity). Helical transmembrane passes span 377–397 (FGVA…PLAS), 447–467 (WPVA…YITI), 492–512 (LFGL…WPLI), and 538–558 (WMPL…VIYW).

This sequence belongs to the OXA1/ALB3/YidC family. Type 1 subfamily. In terms of assembly, interacts with the Sec translocase complex via SecD. Specifically interacts with transmembrane segments of nascent integral membrane proteins during membrane integration.

It is found in the cell inner membrane. Functionally, required for the insertion and/or proper folding and/or complex formation of integral membrane proteins into the membrane. Involved in integration of membrane proteins that insert both dependently and independently of the Sec translocase complex, as well as at least some lipoproteins. Aids folding of multispanning membrane proteins. This is Membrane protein insertase YidC from Rhizobium johnstonii (strain DSM 114642 / LMG 32736 / 3841) (Rhizobium leguminosarum bv. viciae).